The following is a 72-amino-acid chain: DNA-directed RNA polymerase subunit epsilon (72 aa).

Belongs to the RNA polymerase subunit epsilon family. RNAP is composed of a core of 2 alpha, a beta and a beta' subunit. The core is associated with a delta subunit, and at least one of epsilon or omega. When a sigma factor is associated with the core the holoenzyme is formed, which can initiate transcription.

The catalysed reaction is RNA(n) + a ribonucleoside 5'-triphosphate = RNA(n+1) + diphosphate. In terms of biological role, a non-essential component of RNA polymerase (RNAP). This is DNA-directed RNA polymerase subunit epsilon from Staphylococcus aureus (strain JH1).